Here is a 513-residue protein sequence, read N- to C-terminus: Calcium-dependent protein kinase 2 (513 aa).

A lipid anchor (N-myristoyl glycine) is attached at glycine 2. The Protein kinase domain occupies 72–326 (YIIDEKLGQG…IEEALNHPWI (255 aa)). Residues 78-86 (LGQGTYGCV) and lysine 101 contribute to the ATP site. Aspartate 192 (proton acceptor) is an active-site residue. Residues 345-353 (NLKNFKKEN) carry the J domain autoinhibitory motif motif. The segment at 345–380 (NLKNFKKENELKKIALTIIAKHLCDVEINNLRNIFI) is j domain. Positions 354-363 (ELKKIALTII) match the J domain EF-hand interaction motif motif. 4 consecutive EF-hand domains span residues 370–405 (VEIN…IGYQ), 406–441 (KIPP…KQTY), 442–477 (LKKE…DDIE), and 480–513 (LIDK…SKKK). Positions 383, 385, 387, 389, and 394 each coordinate Ca(2+). 10 residues coordinate Ca(2+): aspartate 455, aspartate 457, asparagine 459, lysine 461, glutamate 466, aspartate 493, asparagine 495, aspartate 497, glutamate 499, and glutamate 504.

It belongs to the protein kinase superfamily. Ser/Thr protein kinase family. CDPK subfamily. Monomer. It depends on Mg(2+) as a cofactor. Myristoylated; myristoylation may target it to different subcellular compartments. Post-translationally, autophosphorylated in vitro.

It catalyses the reaction L-seryl-[protein] + ATP = O-phospho-L-seryl-[protein] + ADP + H(+). The enzyme catalyses L-threonyl-[protein] + ATP = O-phospho-L-threonyl-[protein] + ADP + H(+). With respect to regulation, activated by calcium. Upon calcium binding to the EF-hand domains, the C-terminus of the junction domain (J domain) undergoes a conformational change which results in the dissociation of the pseudo-substrate inhibitory motif from the catalytic domain. This, in turn, may facilitate the autophosphorylation of the activation loop at Thr-232, which leads to the kinase activation. Calcium-dependent protein kinase which acts as a sensor and effector of intracellular Ca(2+) levels probably in part downstream of cGMP-activated PKG kinase. During male gametogenesis in the mosquito gut, required for male exflagellation, possibly by regulating male gamete exit from the host erythrocytes. Not required for asexual blood stage proliferation. This chain is Calcium-dependent protein kinase 2, found in Plasmodium falciparum (isolate K1 / Thailand).